We begin with the raw amino-acid sequence, 68 residues long: UPF0253 protein VF_0662 (68 aa).

Belongs to the UPF0253 family.

The sequence is that of UPF0253 protein VF_0662 from Aliivibrio fischeri (strain ATCC 700601 / ES114) (Vibrio fischeri).